A 339-amino-acid polypeptide reads, in one-letter code: Heat-inducible transcription repressor HrcA (339 aa).

The protein belongs to the HrcA family.

Functionally, negative regulator of class I heat shock genes (grpE-dnaK-dnaJ and groELS operons). Prevents heat-shock induction of these operons. The sequence is that of Heat-inducible transcription repressor HrcA from Frankia casuarinae (strain DSM 45818 / CECT 9043 / HFP020203 / CcI3).